Here is a 318-residue protein sequence, read N- to C-terminus: Acetyl-coenzyme A carboxylase carboxyl transferase subunit alpha (318 aa).

A CoA carboxyltransferase C-terminal domain is found at 43–293 (RSQTALRDLY…GDGIAAALKS (251 aa)).

This sequence belongs to the AccA family. Acetyl-CoA carboxylase is a heterohexamer composed of biotin carboxyl carrier protein (AccB), biotin carboxylase (AccC) and two subunits each of ACCase subunit alpha (AccA) and ACCase subunit beta (AccD).

The protein resides in the cytoplasm. The enzyme catalyses N(6)-carboxybiotinyl-L-lysyl-[protein] + acetyl-CoA = N(6)-biotinyl-L-lysyl-[protein] + malonyl-CoA. It participates in lipid metabolism; malonyl-CoA biosynthesis; malonyl-CoA from acetyl-CoA: step 1/1. Functionally, component of the acetyl coenzyme A carboxylase (ACC) complex. First, biotin carboxylase catalyzes the carboxylation of biotin on its carrier protein (BCCP) and then the CO(2) group is transferred by the carboxyltransferase to acetyl-CoA to form malonyl-CoA. This chain is Acetyl-coenzyme A carboxylase carboxyl transferase subunit alpha, found in Bartonella bacilliformis (strain ATCC 35685 / KC583 / Herrer 020/F12,63).